A 545-amino-acid polypeptide reads, in one-letter code: CTP synthase (545 aa).

The amidoligase domain stretch occupies residues 1 to 266; it reads MATNYIFVTG…DDIVTKRFNL (266 aa). Residue S14 participates in CTP binding. S14 provides a ligand contact to UTP. Residues 15 to 20 and D72 contribute to the ATP site; that span reads SLGKGI. Mg(2+)-binding residues include D72 and E140. Residues 147–149, 187–192, and K223 contribute to the CTP site; these read DIE and KTKPTQ. Residues 187–192 and K223 each bind UTP; that span reads KTKPTQ. 239 to 241 is a binding site for ATP; sequence RDV. Residues 291–542 enclose the Glutamine amidotransferase type-1 domain; sequence TVGFVGKYVE…IEAAGEFHKE (252 aa). G352 contacts L-glutamine. C379 (nucleophile; for glutamine hydrolysis) is an active-site residue. L-glutamine-binding positions include 380–383, E403, and R470; that span reads LGMQ. Active-site residues include H515 and E517.

Belongs to the CTP synthase family. In terms of assembly, homotetramer.

It carries out the reaction UTP + L-glutamine + ATP + H2O = CTP + L-glutamate + ADP + phosphate + 2 H(+). It catalyses the reaction L-glutamine + H2O = L-glutamate + NH4(+). The enzyme catalyses UTP + NH4(+) + ATP = CTP + ADP + phosphate + 2 H(+). The protein operates within pyrimidine metabolism; CTP biosynthesis via de novo pathway; CTP from UDP: step 2/2. Allosterically activated by GTP, when glutamine is the substrate; GTP has no effect on the reaction when ammonia is the substrate. The allosteric effector GTP functions by stabilizing the protein conformation that binds the tetrahedral intermediate(s) formed during glutamine hydrolysis. Inhibited by the product CTP, via allosteric rather than competitive inhibition. In terms of biological role, catalyzes the ATP-dependent amination of UTP to CTP with either L-glutamine or ammonia as the source of nitrogen. Regulates intracellular CTP levels through interactions with the four ribonucleotide triphosphates. This Idiomarina loihiensis (strain ATCC BAA-735 / DSM 15497 / L2-TR) protein is CTP synthase.